Here is a 141-residue protein sequence, read N- to C-terminus: Hemoglobin subunit alpha (141 aa).

One can recognise a Globin domain in the interval 1-141 (VLSSADKTNI…VSTVLTSKYR (141 aa)). Phosphoserine is present on serine 3. Lysine 7 carries the post-translational modification N6-succinyllysine. Threonine 8 is modified (phosphothreonine). Lysine 11 bears the N6-succinyllysine mark. The residue at position 16 (lysine 16) is an N6-acetyllysine; alternate. Lysine 16 carries the post-translational modification N6-succinyllysine; alternate. Tyrosine 24 is modified (phosphotyrosine). Phosphoserine is present on serine 35. At lysine 40 the chain carries N6-succinyllysine. Serine 49 bears the Phosphoserine mark. Position 58 (histidine 58) interacts with O2. Histidine 87 lines the heme b pocket. At serine 102 the chain carries Phosphoserine. Residue threonine 108 is modified to Phosphothreonine. Residues serine 124 and serine 131 each carry the phosphoserine modification. Phosphothreonine is present on residues threonine 134 and threonine 137. The residue at position 138 (serine 138) is a Phosphoserine.

It belongs to the globin family. In terms of assembly, heterotetramer of two alpha chains and two beta chains. In terms of tissue distribution, red blood cells.

Its function is as follows. Involved in oxygen transport from the lung to the various peripheral tissues. Functionally, hemopressin acts as an antagonist peptide of the cannabinoid receptor CNR1. Hemopressin-binding efficiently blocks cannabinoid receptor CNR1 and subsequent signaling. This chain is Hemoglobin subunit alpha (HBA), found in Rousettus aegyptiacus (Egyptian fruit bat).